We begin with the raw amino-acid sequence, 99 residues long: Co-chaperonin GroES (99 aa).

The protein belongs to the GroES chaperonin family. As to quaternary structure, heptamer of 7 subunits arranged in a ring. Interacts with the chaperonin GroEL.

Its subcellular location is the cytoplasm. Its function is as follows. Together with the chaperonin GroEL, plays an essential role in assisting protein folding. The GroEL-GroES system forms a nano-cage that allows encapsulation of the non-native substrate proteins and provides a physical environment optimized to promote and accelerate protein folding. GroES binds to the apical surface of the GroEL ring, thereby capping the opening of the GroEL channel. This Corynebacterium glutamicum (strain R) protein is Co-chaperonin GroES.